The following is a 226-amino-acid chain: Cytidylate kinase (226 aa).

Residue 12 to 20 (GPSGAGKGT) coordinates ATP.

The protein belongs to the cytidylate kinase family. Type 1 subfamily.

Its subcellular location is the cytoplasm. The enzyme catalyses CMP + ATP = CDP + ADP. The catalysed reaction is dCMP + ATP = dCDP + ADP. This is Cytidylate kinase from Vibrio parahaemolyticus serotype O3:K6 (strain RIMD 2210633).